The sequence spans 471 residues: Glutamate--tRNA ligase (471 aa).

The 'HIGH' region motif lies at 9–19 (PSPTGYLHVGG). Zn(2+) is bound by residues Cys-98, Cys-100, Cys-125, and Asp-127. The 'KMSKS' region signature appears at 237–241 (KLSKR). ATP is bound at residue Lys-240.

It belongs to the class-I aminoacyl-tRNA synthetase family. Glutamate--tRNA ligase type 1 subfamily. As to quaternary structure, monomer. It depends on Zn(2+) as a cofactor.

The protein resides in the cytoplasm. It catalyses the reaction tRNA(Glu) + L-glutamate + ATP = L-glutamyl-tRNA(Glu) + AMP + diphosphate. Catalyzes the attachment of glutamate to tRNA(Glu) in a two-step reaction: glutamate is first activated by ATP to form Glu-AMP and then transferred to the acceptor end of tRNA(Glu). The protein is Glutamate--tRNA ligase of Yersinia enterocolitica serotype O:8 / biotype 1B (strain NCTC 13174 / 8081).